Consider the following 230-residue polypeptide: Ion-translocating oxidoreductase complex subunit E (230 aa).

The next 6 membrane-spanning stretches (helical) occupy residues 18-38 (ALVQ…ATNA), 39-59 (LGLG…VSAL), 63-83 (TPAE…VSAV), 86-106 (LINA…PLIV), 125-145 (WLSA…MFVL), and 182-202 (PFLL…MLAV).

The protein belongs to the NqrDE/RnfAE family. In terms of assembly, the complex is composed of six subunits: RsxA, RsxB, RsxC, RsxD, RsxE and RsxG.

It localises to the cell inner membrane. Part of a membrane-bound complex that couples electron transfer with translocation of ions across the membrane. Required to maintain the reduced state of SoxR. This is Ion-translocating oxidoreductase complex subunit E from Salmonella dublin (strain CT_02021853).